The primary structure comprises 42 residues: Ostricacin-4 (42 aa).

Intrachain disulfides connect Cys8–Cys36, Cys15–Cys30, and Cys20–Cys37.

Its subcellular location is the secreted. In terms of biological role, has antibacterial activity against the Gram-positive bacterium S.aureus 1056 MRSA (MIC=11.48 ug/ml) and the Gram-negative bacterium E.coli O157:H7 (MIC=12.03 ug/ml). Does not have antifungal activity against the yeast C.albicans 3153A. The chain is Ostricacin-4 from Struthio camelus (Common ostrich).